The sequence spans 457 residues: Amidophosphoribosyltransferase (457 aa).

Residue Cys2 is the Nucleophile of the active site. The Glutamine amidotransferase type-2 domain occupies 2-223; that stretch reads CGVVGIYHPD…PGKAAIIKDG (222 aa). Cys239 is a [4Fe-4S] cluster binding site. The Mg(2+) site is built by Ser286, Asp348, and Asp349. The [4Fe-4S] cluster site is built by Cys385, Cys438, and Cys441.

In the C-terminal section; belongs to the purine/pyrimidine phosphoribosyltransferase family. Mg(2+) is required as a cofactor. [4Fe-4S] cluster serves as cofactor.

The enzyme catalyses 5-phospho-beta-D-ribosylamine + L-glutamate + diphosphate = 5-phospho-alpha-D-ribose 1-diphosphate + L-glutamine + H2O. It participates in purine metabolism; IMP biosynthesis via de novo pathway; N(1)-(5-phospho-D-ribosyl)glycinamide from 5-phospho-alpha-D-ribose 1-diphosphate: step 1/2. Its function is as follows. Catalyzes the formation of phosphoribosylamine from phosphoribosylpyrophosphate (PRPP) and glutamine. The sequence is that of Amidophosphoribosyltransferase from Archaeoglobus fulgidus (strain ATCC 49558 / DSM 4304 / JCM 9628 / NBRC 100126 / VC-16).